Consider the following 316-residue polypeptide: Ribosomal RNA small subunit methyltransferase H (316 aa).

S-adenosyl-L-methionine is bound by residues serine 35–histidine 37, aspartate 55, phenylalanine 84, aspartate 105, and glutamine 112.

This sequence belongs to the methyltransferase superfamily. RsmH family.

The protein localises to the cytoplasm. It catalyses the reaction cytidine(1402) in 16S rRNA + S-adenosyl-L-methionine = N(4)-methylcytidine(1402) in 16S rRNA + S-adenosyl-L-homocysteine + H(+). Specifically methylates the N4 position of cytidine in position 1402 (C1402) of 16S rRNA. The protein is Ribosomal RNA small subunit methyltransferase H of Streptococcus dysgalactiae subsp. equisimilis (strain GGS_124).